The sequence spans 153 residues: Endoribonuclease YbeY (153 aa).

3 residues coordinate Zn(2+): histidine 118, histidine 122, and histidine 128.

This sequence belongs to the endoribonuclease YbeY family. The cofactor is Zn(2+).

Its subcellular location is the cytoplasm. In terms of biological role, single strand-specific metallo-endoribonuclease involved in late-stage 70S ribosome quality control and in maturation of the 3' terminus of the 16S rRNA. The polypeptide is Endoribonuclease YbeY (Oenococcus oeni (strain ATCC BAA-331 / PSU-1)).